Here is a 323-residue protein sequence, read N- to C-terminus: Low affinity immunoglobulin gamma Fc region receptor II-c (323 aa).

Residues 1 to 42 (MGILSFLPVLATESDWADCKSPQPWGHMLLWTAVLFLAPVAG) form the signal peptide. Over 43–223 (TPAAPPKAVL…VQAPSSSPMG (181 aa)) the chain is Extracellular. 2 consecutive Ig-like C2-type domains span residues 48-127 (PKAV…VHLT) and 131-213 (EWLV…VTIT). Intrachain disulfides connect C71-C113 and C152-C196. N-linked (GlcNAc...) asparagine glycans are attached at residues N106, N180, and N187. A helical membrane pass occupies residues 224–246 (IIVAVVTGIAVAAIVAAVVALIY). Residues 247–323 (CRKKRISANS…PPNDHVNSNN (77 aa)) lie on the Cytoplasmic side of the membrane. The interval 277 to 323 (KRQPEETNNDYETADGGYMTLNPRAPTDDDKNIYLTLPPNDHVNSNN) is disordered. Phosphotyrosine; by SRC-type Tyr-kinases occurs at positions 294 and 310.

Phosphorylated by SRC-type Tyr-kinases such as LYN, BLK, FYN and SYK. In terms of tissue distribution, isoform IIC1 is detected in monocytes, macrophages, polymorphonuclear cells and natural killer cells.

It is found in the cytoplasm. Its subcellular location is the cell membrane. Its function is as follows. Receptor for the Fc region of complexed immunoglobulins gamma. Low affinity receptor. Involved in a variety of effector and regulatory functions such as phagocytosis of immune complexes and modulation of antibody production by B-cells. This chain is Low affinity immunoglobulin gamma Fc region receptor II-c (FCGR2C), found in Homo sapiens (Human).